Reading from the N-terminus, the 440-residue chain is Thymidine phosphorylase (440 aa).

Belongs to the thymidine/pyrimidine-nucleoside phosphorylase family. Homodimer.

It catalyses the reaction thymidine + phosphate = 2-deoxy-alpha-D-ribose 1-phosphate + thymine. It participates in pyrimidine metabolism; dTMP biosynthesis via salvage pathway; dTMP from thymine: step 1/2. Functionally, the enzymes which catalyze the reversible phosphorolysis of pyrimidine nucleosides are involved in the degradation of these compounds and in their utilization as carbon and energy sources, or in the rescue of pyrimidine bases for nucleotide synthesis. This Shigella boydii serotype 4 (strain Sb227) protein is Thymidine phosphorylase.